Consider the following 300-residue polypeptide: Homoserine kinase (300 aa).

Proline 87–alanine 97 provides a ligand contact to ATP.

Belongs to the GHMP kinase family. Homoserine kinase subfamily.

It is found in the cytoplasm. It catalyses the reaction L-homoserine + ATP = O-phospho-L-homoserine + ADP + H(+). It participates in amino-acid biosynthesis; L-threonine biosynthesis; L-threonine from L-aspartate: step 4/5. In terms of biological role, catalyzes the ATP-dependent phosphorylation of L-homoserine to L-homoserine phosphate. In Clostridium kluyveri (strain ATCC 8527 / DSM 555 / NBRC 12016 / NCIMB 10680 / K1), this protein is Homoserine kinase.